The chain runs to 129 residues: Copper chaperone GriE (129 aa).

Residues 1-37 (MPMNRREMVMATTGAALAAAAAVPLLSGGEGEGAAEA) constitute a signal peptide (tat-type signal). Residues 32 to 51 (EGAAEAAAAPAKATGRGREH) form a disordered region. The span at 34–45 (AAEAAAAPAKAT) shows a compositional bias: low complexity.

This sequence belongs to the melC1 family. In terms of processing, predicted to be exported by the Tat system. The position of the signal peptide cleavage has not been experimentally proven.

Functionally, involved in the transfer of Cu(2+) ions to the apo form of o-aminophenol oxidase GriF in the grixazone biosynthetic pathway. This Streptomyces griseus subsp. griseus (strain JCM 4626 / CBS 651.72 / NBRC 13350 / KCC S-0626 / ISP 5235) protein is Copper chaperone GriE (griE).